A 142-amino-acid chain; its full sequence is Large ribosomal subunit protein uL13 (142 aa).

This sequence belongs to the universal ribosomal protein uL13 family. In terms of assembly, part of the 50S ribosomal subunit.

In terms of biological role, this protein is one of the early assembly proteins of the 50S ribosomal subunit, although it is not seen to bind rRNA by itself. It is important during the early stages of 50S assembly. The protein is Large ribosomal subunit protein uL13 of Bordetella bronchiseptica (strain ATCC BAA-588 / NCTC 13252 / RB50) (Alcaligenes bronchisepticus).